Reading from the N-terminus, the 842-residue chain is Elongation factor G, mitochondrial (842 aa).

A mitochondrion-targeting transit peptide spans 1 to 58 (MVAIPRVAAARSLARQLARQSLRTTSFASAPVRIAIASTPLARSPSSFRSLSSSTRRS). In terms of domain architecture, tr-type G spans 93 to 398 (VRQRNVGISA…GVCSYLPNPA (306 aa)). GTP-binding positions include 102–109 (AHIDSGKT), 196–200 (DTPGH), and 250–253 (NKMD). The disordered stretch occupies residues 423–442 (AGEDQEAAAEARKNAAPPVL).

This sequence belongs to the TRAFAC class translation factor GTPase superfamily. Classic translation factor GTPase family. EF-G/EF-2 subfamily.

It is found in the mitochondrion. It participates in protein biosynthesis; polypeptide chain elongation. Functionally, mitochondrial GTPase that catalyzes the GTP-dependent ribosomal translocation step during translation elongation. During this step, the ribosome changes from the pre-translocational (PRE) to the post-translocational (POST) state as the newly formed A-site-bound peptidyl-tRNA and P-site-bound deacylated tRNA move to the P and E sites, respectively. Catalyzes the coordinated movement of the two tRNA molecules, the mRNA and conformational changes in the ribosome. In Mycosarcoma maydis (Corn smut fungus), this protein is Elongation factor G, mitochondrial.